Reading from the N-terminus, the 471-residue chain is UDP-N-acetylmuramate--L-alanine ligase (471 aa).

G112–T118 lines the ATP pocket.

This sequence belongs to the MurCDEF family.

The protein localises to the cytoplasm. It carries out the reaction UDP-N-acetyl-alpha-D-muramate + L-alanine + ATP = UDP-N-acetyl-alpha-D-muramoyl-L-alanine + ADP + phosphate + H(+). It functions in the pathway cell wall biogenesis; peptidoglycan biosynthesis. In terms of biological role, cell wall formation. This is UDP-N-acetylmuramate--L-alanine ligase from Cupriavidus metallidurans (strain ATCC 43123 / DSM 2839 / NBRC 102507 / CH34) (Ralstonia metallidurans).